Reading from the N-terminus, the 183-residue chain is Helofensin-2 (183 aa).

The signal sequence occupies residues 1 to 26; that stretch reads MQMDWLFIAVISGIGLLSSGVPGTQG. A C(6)C(4)C(9)C(6)CC 1; approximate repeat occupies 27–64; the sequence is AYTTEQCRALNGSCNFYACFPKNVIIGKCDWWGWSCCA. The stretch at 65–101 is one C(6)C(4)C(9)C(6)CC 2; approximate repeat; sequence RTPLERCTAKKGTCTKTGCTKTDTDHGPCDGGAQCCQ. One copy of the C(6)C(4)C(9)C(6)CC 3; approximate repeat lies at 102–139; the sequence is RDPVKYCKFHGNVCGRGKCPMDHIPIGEQCMPGYPCCK. The stretch at 140 to 177 is one C(6)C(4)C(9)C(6)CC 4; approximate repeat; it reads RDGPAYCKSKGGKCLRRCSQIVPTDIIGVCADGVPCCK.

It belongs to the beta-defensin family. Helofensin subfamily. As to expression, expressed by the mandibular venom gland.

Its subcellular location is the secreted. Functionally, lethal toxin which possesses an inhibitory effect on direct electrical stimulation of the isolated hemi-diaphragm of mice. Neither hemorrhagic nor hemolytic activities are detected. Phospholipase A2 activity, proteolytic activity and arginine esterolytic activity are absent. The sequence is that of Helofensin-2 from Heloderma suspectum cinctum (Banded Gila monster).